The following is a 340-amino-acid chain: Glycerol-3-phosphate dehydrogenase [NAD(P)+] (340 aa).

Residues S13, Y14, and K108 each coordinate NADPH. Positions 108, 137, and 139 each coordinate sn-glycerol 3-phosphate. Residue A141 coordinates NADPH. 5 residues coordinate sn-glycerol 3-phosphate: K193, D246, S256, R257, and N258. Residue K193 is the Proton acceptor of the active site. Residue R257 participates in NADPH binding. NADPH-binding residues include I281 and E283.

Belongs to the NAD-dependent glycerol-3-phosphate dehydrogenase family.

The protein resides in the cytoplasm. The catalysed reaction is sn-glycerol 3-phosphate + NAD(+) = dihydroxyacetone phosphate + NADH + H(+). The enzyme catalyses sn-glycerol 3-phosphate + NADP(+) = dihydroxyacetone phosphate + NADPH + H(+). It functions in the pathway membrane lipid metabolism; glycerophospholipid metabolism. In terms of biological role, catalyzes the reduction of the glycolytic intermediate dihydroxyacetone phosphate (DHAP) to sn-glycerol 3-phosphate (G3P), the key precursor for phospholipid synthesis. This is Glycerol-3-phosphate dehydrogenase [NAD(P)+] from Bartonella quintana (strain Toulouse) (Rochalimaea quintana).